The sequence spans 766 residues: Darlin (766 aa).

ARM repeat units lie at residues 82–119 (QLFE…NLTY), 167–208 (DFIQ…NLVD), 423–464 (EPNC…NLTL), and 465–537 (PTIN…ASMD). Residues 561-585 (EEKEKTIEKTDEKTDEKTNEKKQSK) are disordered. An ARM 5 repeat occupies 610–649 (HQEKMKQLIEESVEPFFSLLQSPFPILQVEGAKGLVLLIK).

It belongs to the RAP1GDS1 family. As to quaternary structure, binds to small GTPases racE, racC but not rab21. Binds preferentially to GDP-bound racE.

Its function is as follows. Part of a signaling pathway that initiates the aggregation and leads to the formation of aggregation centers or streams. Not essential for cytokinesis, pinocytosis or phagocytosis. Not essential for development, except in starvation-induced aggregation. The chain is Darlin (darA) from Dictyostelium discoideum (Social amoeba).